We begin with the raw amino-acid sequence, 325 residues long: DNA-directed RNA polymerase subunit alpha (325 aa).

The tract at residues 1–231 (MQTSLLKPKI…DQLSVFAALE (231 aa)) is alpha N-terminal domain (alpha-NTD). Residues 246 to 325 (IDPILLRPVD…ENWPPAGLDK (80 aa)) form an alpha C-terminal domain (alpha-CTD) region.

It belongs to the RNA polymerase alpha chain family. As to quaternary structure, homodimer. The RNAP catalytic core consists of 2 alpha, 1 beta, 1 beta' and 1 omega subunit. When a sigma factor is associated with the core the holoenzyme is formed, which can initiate transcription.

It catalyses the reaction RNA(n) + a ribonucleoside 5'-triphosphate = RNA(n+1) + diphosphate. DNA-dependent RNA polymerase catalyzes the transcription of DNA into RNA using the four ribonucleoside triphosphates as substrates. In Burkholderia mallei (strain NCTC 10247), this protein is DNA-directed RNA polymerase subunit alpha.